A 231-amino-acid polypeptide reads, in one-letter code: Phosphatidate cytidylyltransferase (231 aa).

Helical transmembrane passes span 33-53 (FVVA…LVAI), 67-87 (IMYL…LIFL), 95-115 (WLIM…MIGG), 133-153 (WSGL…ISFI), 167-187 (IYLF…DLFI), and 206-226 (HGGV…LFFI).

This sequence belongs to the CDS family.

It is found in the cell membrane. It carries out the reaction a 1,2-diacyl-sn-glycero-3-phosphate + CTP + H(+) = a CDP-1,2-diacyl-sn-glycerol + diphosphate. It participates in phospholipid metabolism; CDP-diacylglycerol biosynthesis; CDP-diacylglycerol from sn-glycerol 3-phosphate: step 3/3. This is Phosphatidate cytidylyltransferase (cdsA) from Rickettsia bellii (strain RML369-C).